A 515-amino-acid polypeptide reads, in one-letter code: Maturase K (515 aa).

This sequence belongs to the intron maturase 2 family. MatK subfamily.

It localises to the plastid. The protein resides in the chloroplast. Functionally, usually encoded in the trnK tRNA gene intron. Probably assists in splicing its own and other chloroplast group II introns. This Pseudotsuga menziesii (Douglas-fir) protein is Maturase K.